We begin with the raw amino-acid sequence, 312 residues long: Malate dehydrogenase (312 aa).

NAD(+) is bound by residues 7-13 and Asp-34; that span reads GAAGGIG. The substrate site is built by Arg-81 and Arg-87. NAD(+) is bound by residues Asn-94 and 117-119; that span reads ITN. Substrate contacts are provided by Asn-119 and Arg-153. The Proton acceptor role is filled by His-177. Position 227 (Met-227) interacts with NAD(+).

It belongs to the LDH/MDH superfamily. MDH type 1 family. Homodimer.

It catalyses the reaction (S)-malate + NAD(+) = oxaloacetate + NADH + H(+). Catalyzes the reversible oxidation of malate to oxaloacetate. This is Malate dehydrogenase from Salmonella dublin (strain CT_02021853).